We begin with the raw amino-acid sequence, 341 residues long: RNA 3'-terminal phosphate cyclase (341 aa).

ATP-binding positions include glutamine 100 and phenylalanine 283–glutamine 287. Catalysis depends on histidine 307, which acts as the Tele-AMP-histidine intermediate.

Belongs to the RNA 3'-terminal cyclase family. Type 1 subfamily.

It localises to the cytoplasm. The enzyme catalyses a 3'-end 3'-phospho-ribonucleotide-RNA + ATP = a 3'-end 2',3'-cyclophospho-ribonucleotide-RNA + AMP + diphosphate. Catalyzes the conversion of 3'-phosphate to a 2',3'-cyclic phosphodiester at the end of RNA. The mechanism of action of the enzyme occurs in 3 steps: (A) adenylation of the enzyme by ATP; (B) transfer of adenylate to an RNA-N3'P to produce RNA-N3'PP5'A; (C) and attack of the adjacent 2'-hydroxyl on the 3'-phosphorus in the diester linkage to produce the cyclic end product. The biological role of this enzyme is unknown but it is likely to function in some aspects of cellular RNA processing. The protein is RNA 3'-terminal phosphate cyclase (rtcA) of Pyrococcus horikoshii (strain ATCC 700860 / DSM 12428 / JCM 9974 / NBRC 100139 / OT-3).